A 620-amino-acid polypeptide reads, in one-letter code: Transcription factor kayak (620 aa).

2 disordered regions span residues 1-36 and 184-288; these read MKVK…SNGV and SDTD…EKRR. Over residues 184-194 the composition is skewed to polar residues; it reads SDTDDSNASWN. Low complexity-rich tracts occupy residues 201-233 and 249-266; these read GDTT…GANN and ANNN…PAAR. The 64-residue stretch at 284–347 folds into the bZIP domain; the sequence is EEKRRIRRER…NQLKYVIEAH (64 aa). Residues 286–305 form a basic motif region; that stretch reads KRRIRRERNKAAAARCRKRR. A leucine-zipper region spans residues 312-340; it reads LTEEVDALVKKGDTLKAEITTLTELRNQL. A disordered region spans residues 375–414; the sequence is STGGSSCGSVHSNHSHNNNNNNNNSNDSSSGTITGFDATL. Over residues 377–405 the composition is skewed to low complexity; that stretch reads GGSSCGSVHSNHSHNNNNNNNNSNDSSSG. At Ser-422 the chain carries Phosphoserine. Disordered regions lie at residues 447-466 and 590-620; these read GLDS…AKRA and SGPL…LCPL.

This sequence belongs to the bZIP family. Fos subfamily. As to quaternary structure, homodimer. Heterodimer with Jra. The kay-Jra heterodimer binds more stably to the AP-1 site than either of the two proteins alone.

The protein resides in the nucleus. In terms of biological role, developmentally regulated transcription factor AP-1 binds and recognizes the enhancer DNA sequence: 5'-TGA[CG]TCA-3'. May play a role in the function or determination of a particular subset of cells in the developing embryo. It is able to carry out its function either independently of or in conjunction with Jra. This chain is Transcription factor kayak, found in Drosophila willistoni (Fruit fly).